The primary structure comprises 444 residues: Probable glycolate oxidase iron-sulfur subunit (444 aa).

4Fe-4S ferredoxin-type domains are found at residues 14-46 and 69-100; these read FKER…GFQE and EDVE…LLEE. Residues Cys26, Cys29, Cys32, Cys36, Cys78, Cys81, Cys84, and Cys88 each coordinate [4Fe-4S] cluster.

The glycolate oxidase likely consists of several subunits including GlcD and GlcF. [4Fe-4S] cluster is required as a cofactor.

It localises to the cell membrane. The enzyme catalyses glycolate + A = glyoxylate + AH2. It catalyses the reaction (R)-lactate + A = pyruvate + AH2. Functionally, component of a complex that catalyzes the oxidation of glycolate to glyoxylate. Is also able to oxidize D-lactate ((R)-lactate). Does not link directly to O(2), and 2,6-dichloroindophenol (DCIP) and phenazine methosulfate (PMS) can act as artificial electron acceptors in vitro, but the physiological molecule that functions as primary electron acceptor during glycolate oxidation is unknown. The chain is Probable glycolate oxidase iron-sulfur subunit (glcF) from Bacillus subtilis (strain 168).